A 603-amino-acid chain; its full sequence is MASERQKKIRNFCIIAHIDHGKSTLADRLLEMTGVLTEREMEDQVLDTMEIERERGITIKAQAVRMVYKAKDGEEYILNLIDTPGHVDFNYEVSRSLAACEGAILVVDAAQGIEAQTLANVYLALDHDLEILPVINKIDLPSAQPDVVKKEIEDVIGLDASEAPLISAKNGINIEAVLESVVKNVPPPEGDENAPLRALIFDSYYDSYKGVIVYIRVKEGTLKLGDKVRMMYTNKEFTVTEIGYMKPGGLVPGTQLSAGEVGYFAASIKNVKDTRVGDTVTTADNPAKEPLPGYKKVNPMVFCGIYPADGSKYGDLRDALEKLQLNDASLTFEPESSVALGFGFRCGFLGLLHMEIIQERLEREFDFDLVTTAPSVIYKVTKTNGETLYIDNPTNLPPPAEIKTMEEPIVKATIMTPTEYVGNIMELAQERRGIYKDMTYIDEGRVMLTYELPLNEIIYDFFDALKSRTKGYASLDYEMLGYRESDLVKLDIMLNGEIVDALSFIVHREKAYARGRRIAEKLKEAIPRQQFEVPIQACIGGKIIARETVKAYRKDVLAKCYGGDITRKKKLLEKQKEGKKRMRQIGTVEVPQEAFMSVLKLDT.

The 183-residue stretch at 7 to 189 (KKIRNFCIIA…SVVKNVPPPE (183 aa)) folds into the tr-type G domain. GTP contacts are provided by residues 19 to 24 (DHGKST) and 136 to 139 (NKID).

This sequence belongs to the TRAFAC class translation factor GTPase superfamily. Classic translation factor GTPase family. LepA subfamily.

It localises to the cell membrane. It carries out the reaction GTP + H2O = GDP + phosphate + H(+). Required for accurate and efficient protein synthesis under certain stress conditions. May act as a fidelity factor of the translation reaction, by catalyzing a one-codon backward translocation of tRNAs on improperly translocated ribosomes. Back-translocation proceeds from a post-translocation (POST) complex to a pre-translocation (PRE) complex, thus giving elongation factor G a second chance to translocate the tRNAs correctly. Binds to ribosomes in a GTP-dependent manner. This is Elongation factor 4 from Acetivibrio thermocellus (strain ATCC 27405 / DSM 1237 / JCM 9322 / NBRC 103400 / NCIMB 10682 / NRRL B-4536 / VPI 7372) (Clostridium thermocellum).